The primary structure comprises 111 residues: Cell division protein FtsB (111 aa).

Over 1–3 (MRL) the chain is Cytoplasmic. A helical transmembrane segment spans residues 4 to 21 (ITLFLLLLLLAIQYPLWL). Residues 22–111 (GKGGWLRVWD…PPPAGQQAHH (90 aa)) are Periplasmic-facing. A coiled-coil region spans residues 31–64 (DMQKQVTAQNQRNAELKQRNTKLEGEVKDLKEGT). The interval 89 to 111 (APAPKTSETPLPPPPPAGQQAHH) is disordered.

Belongs to the FtsB family. In terms of assembly, part of a complex composed of FtsB, FtsL and FtsQ.

Its subcellular location is the cell inner membrane. Essential cell division protein. May link together the upstream cell division proteins, which are predominantly cytoplasmic, with the downstream cell division proteins, which are predominantly periplasmic. The chain is Cell division protein FtsB from Ralstonia pickettii (strain 12J).